A 126-amino-acid polypeptide reads, in one-letter code: Glycine cleavage system H protein (126 aa).

The Lipoyl-binding domain maps to 24 to 105; it reads TLTVGITDHA…AYGVWLFKIK (82 aa). Lysine 65 is modified (N6-lipoyllysine).

This sequence belongs to the GcvH family. In terms of assembly, the glycine cleavage system is composed of four proteins: P, T, L and H. Requires (R)-lipoate as cofactor.

Its function is as follows. The glycine cleavage system catalyzes the degradation of glycine. The H protein shuttles the methylamine group of glycine from the P protein to the T protein. The protein is Glycine cleavage system H protein of Burkholderia ambifaria (strain MC40-6).